The chain runs to 445 residues: Guanosine nucleotide diphosphate dissociation inhibitor At5g09550 (445 aa).

It belongs to the Rab GDI family.

Functionally, regulates the GDP/GTP exchange reaction of most RAB proteins by inhibiting the dissociation of GDP from them, and the subsequent binding of GTP. The sequence is that of Guanosine nucleotide diphosphate dissociation inhibitor At5g09550 from Arabidopsis thaliana (Mouse-ear cress).